Here is a 362-residue protein sequence, read N- to C-terminus: Alcohol dehydrogenase 13 (362 aa).

Positions 51, 73, 104, 107, 110, 118, and 168 each coordinate Zn(2+). Substrate is bound at residue His-73. NAD(+)-binding positions include 193-198 (GLGGLG) and 280-282 (VGA).

This sequence belongs to the zinc-containing alcohol dehydrogenase family. Class-III subfamily. In terms of assembly, homodimer. The cofactor is Zn(2+).

This Catharanthus roseus (Madagascar periwinkle) protein is Alcohol dehydrogenase 13.